The chain runs to 629 residues: Translation initiation factor IF-2 (629 aa).

Positions 1 to 20 (MAKNIKTNKKPQQVNKKEMS) are disordered. The 171-residue stretch at 127 to 297 (HRAPIVTIMG…LLIAEMQDYK (171 aa)) folds into the tr-type G domain. The G1 stretch occupies residues 136 to 143 (GHVDHGKT). 136–143 (GHVDHGKT) is a binding site for GTP. The G2 stretch occupies residues 161–165 (GITQA). Residues 183–186 (DTPG) are G3. Residues 183–187 (DTPGH) and 237–240 (NKCD) each bind GTP. A G4 region spans residues 237–240 (NKCD). Residues 273–275 (SAK) form a G5 region.

This sequence belongs to the TRAFAC class translation factor GTPase superfamily. Classic translation factor GTPase family. IF-2 subfamily.

The protein resides in the cytoplasm. Its function is as follows. One of the essential components for the initiation of protein synthesis. Protects formylmethionyl-tRNA from spontaneous hydrolysis and promotes its binding to the 30S ribosomal subunits. Also involved in the hydrolysis of GTP during the formation of the 70S ribosomal complex. The sequence is that of Translation initiation factor IF-2 from Mesoplasma florum (strain ATCC 33453 / NBRC 100688 / NCTC 11704 / L1) (Acholeplasma florum).